A 328-amino-acid chain; its full sequence is MNTKAGILGVGSYLPEQSYDNFHFEKIMDTSDEWISTRTGIKERRFAKESEATSDLASKAALKAIECAKLNVEDIELIILATITPDMSLPSTACIVQDAIGAVNATAFDISAACSGFVYGVTIAKQFVETGCYKNVLVIGAETCSKFLNYDDRTTAVLFGDGAGAAVIGPVNEGGILSTHMGSDGKGKDCLKVPAGGSRLKASKETVEANLHTIEMAGSDVFKFAVRKMAETSLRALEKANLNTTDIDYLVPHQANIRIIQASSKRLELDMKKVYVNIDKYGNMSAASIPVALDEAYREGKIKKGDNVVLVGFGGGLTWGASVVKWTL.

Active-site residues include Cys114 and His253. An ACP-binding region spans residues 254–258; sequence QANIR. Asn283 is an active-site residue.

Belongs to the thiolase-like superfamily. FabH family. Homodimer.

It localises to the cytoplasm. The catalysed reaction is malonyl-[ACP] + acetyl-CoA + H(+) = 3-oxobutanoyl-[ACP] + CO2 + CoA. Its pathway is lipid metabolism; fatty acid biosynthesis. Its function is as follows. Catalyzes the condensation reaction of fatty acid synthesis by the addition to an acyl acceptor of two carbons from malonyl-ACP. Catalyzes the first condensation reaction which initiates fatty acid synthesis and may therefore play a role in governing the total rate of fatty acid production. Possesses both acetoacetyl-ACP synthase and acetyl transacylase activities. Its substrate specificity determines the biosynthesis of branched-chain and/or straight-chain of fatty acids. The chain is Beta-ketoacyl-[acyl-carrier-protein] synthase III from Clostridioides difficile (strain 630) (Peptoclostridium difficile).